Reading from the N-terminus, the 199-residue chain is Superoxide dismutase [Mn/Fe] (199 aa).

Histidine 27, histidine 81, aspartate 161, and histidine 165 together coordinate Fe(3+). 4 residues coordinate Mn(2+): histidine 27, histidine 81, aspartate 161, and histidine 165.

The protein belongs to the iron/manganese superoxide dismutase family. As to quaternary structure, homodimer. Requires Mn(2+) as cofactor. Fe(3+) is required as a cofactor.

It carries out the reaction 2 superoxide + 2 H(+) = H2O2 + O2. Its function is as follows. Destroys superoxide anion radicals which are normally produced within the cells and which are toxic to biological systems. Catalyzes the dismutation of superoxide anion radicals into O2 and H2O2 by successive reduction and oxidation of the transition metal ion at the active site. This Staphylococcus haemolyticus (strain JCSC1435) protein is Superoxide dismutase [Mn/Fe] (sodA).